Consider the following 192-residue polypeptide: Protein GrpE (192 aa).

A disordered region spans residues 1-34 (MSSKEQKTPNEQVSEEMENTAEQQVEATQETGEC). Positions 20 to 31 (TAEQQVEATQET) are enriched in polar residues.

Belongs to the GrpE family. Homodimer.

The protein resides in the cytoplasm. Participates actively in the response to hyperosmotic and heat shock by preventing the aggregation of stress-denatured proteins, in association with DnaK and GrpE. It is the nucleotide exchange factor for DnaK and may function as a thermosensor. Unfolded proteins bind initially to DnaJ; upon interaction with the DnaJ-bound protein, DnaK hydrolyzes its bound ATP, resulting in the formation of a stable complex. GrpE releases ADP from DnaK; ATP binding to DnaK triggers the release of the substrate protein, thus completing the reaction cycle. Several rounds of ATP-dependent interactions between DnaJ, DnaK and GrpE are required for fully efficient folding. The chain is Protein GrpE from Yersinia pseudotuberculosis serotype I (strain IP32953).